Reading from the N-terminus, the 63-residue chain is DNA-directed RNA polymerase 7 kDa subunit (63 aa).

This sequence belongs to the poxviridae DNA-directed RNA polymerase 7 kDa subunit family. In terms of assembly, the DNA-dependent RNA polymerase used for intermediate and late genes expression consists of eight subunits 147 kDa, 133 kDa, 35 kDa, 30 kDa, 22 kDa, 19 kDa, 18 kDa and 7 kDa totalling more than 500 kDa in mass. The same holoenzyme, with the addition of the transcription-specificity factor RAP94, is used for early gene expression.

Its subcellular location is the virion. The catalysed reaction is RNA(n) + a ribonucleoside 5'-triphosphate = RNA(n+1) + diphosphate. Part of the DNA-dependent RNA polymerase which catalyzes the transcription of viral DNA into RNA using the four ribonucleoside triphosphates as substrates. Responsible for the transcription of early, intermediate and late genes. DNA-dependent RNA polymerase associates with the early transcription factor (ETF) thereby allowing the early genes transcription. Late transcription, and probably also intermediate transcription, require newly synthesized RNA polymerase. This Rabbit fibroma virus (strain Kasza) (RFV) protein is DNA-directed RNA polymerase 7 kDa subunit (RPO7).